The sequence spans 257 residues: NAD-capped RNA hydrolase NudC (257 aa).

Substrate contacts are provided by K25 and R69. Zn(2+) contacts are provided by C98 and C101. E111 contacts substrate. Zn(2+)-binding residues include C116 and C119. A substrate-binding site is contributed by Y124. A Nudix hydrolase domain is found at 125–248 (PQIAPCIIVA…TVARRLIEDT (124 aa)). Positions 158, 174, and 178 each coordinate a divalent metal cation. The Nudix box motif lies at 159–180 (GFVEVGETLEQAVAREVMEESG). 192–199 (QPWPFPQS) contacts substrate. E219 contributes to the a divalent metal cation binding site. Substrate is bound at residue A241.

Belongs to the Nudix hydrolase family. NudC subfamily. Homodimer. The cofactor is Mg(2+). Mn(2+) serves as cofactor. Zn(2+) is required as a cofactor.

The enzyme catalyses a 5'-end NAD(+)-phospho-ribonucleoside in mRNA + H2O = a 5'-end phospho-adenosine-phospho-ribonucleoside in mRNA + beta-nicotinamide D-ribonucleotide + 2 H(+). It carries out the reaction NAD(+) + H2O = beta-nicotinamide D-ribonucleotide + AMP + 2 H(+). The catalysed reaction is NADH + H2O = reduced beta-nicotinamide D-ribonucleotide + AMP + 2 H(+). In terms of biological role, mRNA decapping enzyme that specifically removes the nicotinamide adenine dinucleotide (NAD) cap from a subset of mRNAs by hydrolyzing the diphosphate linkage to produce nicotinamide mononucleotide (NMN) and 5' monophosphate mRNA. The NAD-cap is present at the 5'-end of some mRNAs and stabilizes RNA against 5'-processing. Has preference for mRNAs with a 5'-end purine. Catalyzes the hydrolysis of a broad range of dinucleotide pyrophosphates. The protein is NAD-capped RNA hydrolase NudC of Escherichia coli (strain 55989 / EAEC).